The chain runs to 202 residues: Imidazoleglycerol-phosphate dehydratase (202 aa).

Belongs to the imidazoleglycerol-phosphate dehydratase family.

It is found in the cytoplasm. It catalyses the reaction D-erythro-1-(imidazol-4-yl)glycerol 3-phosphate = 3-(imidazol-4-yl)-2-oxopropyl phosphate + H2O. It participates in amino-acid biosynthesis; L-histidine biosynthesis; L-histidine from 5-phospho-alpha-D-ribose 1-diphosphate: step 6/9. The protein is Imidazoleglycerol-phosphate dehydratase of Rhizobium johnstonii (strain DSM 114642 / LMG 32736 / 3841) (Rhizobium leguminosarum bv. viciae).